The primary structure comprises 150 residues: Urease accessory protein UreE (150 aa).

This sequence belongs to the UreE family.

It is found in the cytoplasm. In terms of biological role, involved in urease metallocenter assembly. Binds nickel. Probably functions as a nickel donor during metallocenter assembly. In Staphylococcus aureus (strain MRSA252), this protein is Urease accessory protein UreE.